Reading from the N-terminus, the 469-residue chain is Acetyl-CoA decarbonylase/synthase complex subunit beta 1 (469 aa).

Positions 189, 192, 278, and 280 each coordinate [Ni-Fe-S] cluster.

It belongs to the CdhC family. Monomer. The ACDS complex is made up of alpha, epsilon, beta, gamma and delta chains with a probable stoichiometry of (alpha(2)epsilon(2))(4)-beta(8)-(gamma(1)delta(1))(8) (Potential). The cofactor is [Ni-Fe-S] cluster.

The catalysed reaction is Co(I)-[corrinoid Fe-S protein] + acetyl-CoA + H(+) = methyl-Co(III)-[corrinoid Fe-S protein] + CO + CoA. It participates in one-carbon metabolism; methanogenesis from acetate. Its function is as follows. Part of a complex that catalyzes the reversible cleavage of acetyl-CoA, allowing growth on acetate as sole source of carbon and energy. The alpha-epsilon complex generates CO from CO(2), while the beta subunit (this protein) combines the CO with CoA and a methyl group to form acetyl-CoA. The methyl group, which is incorporated into acetyl-CoA, is transferred to the beta subunit by a corrinoid iron-sulfur protein (the gamma-delta complex). The protein is Acetyl-CoA decarbonylase/synthase complex subunit beta 1 (cdhC1) of Methanosarcina thermophila.